An 893-amino-acid chain; its full sequence is MKFLVLLFNILCLFPILGADELVMSPIPTTDVQPKVTFDINSEVSSGPLYLNPVEMAGVKYLQLQRQPGVQVHKVVEGDIVIWENEEMPLYTCAIVTQNEVPYMAYVELLEDPDLIFFLKEGDQWAPIPEDQYLARLQQLRQQIHTESFFSLNLSFQHENYKYEMVSSFQHSIKMVVFTPKNGHICKMVYDKNIRIFKALYNEYVTSVIGFFRGLKLLLLNIFVIDDRGMIGNKYFQLLDDKYAPISVQGYVATIPKLKDFAEPYHPIILDISDIDYVNFYLGDATYHDPGFKIVPKTPQCITKVVDGNEVIYESSNPSVECVYKVTYYDKKNESMLRLDLNHSPPSYTSYYAKREGVWVTSTYIDLEEKIEELQDHRSTELDVMFMSDKDLNVVPLTNGNLEYFMVTPKPHRDIIIVFDGSEVLWYYEGLENHLVCTWIYVTEGAPRLVHLRVKDRIPQNTDIYMVKFGEYWVRISKTQYTQEIKKLIKKSKKKLPSIEEEDSDKHGGPPKGPEPPTGPGHSSSESKEHEDSKESKEPKEHGSPKETKEGEVTKKPGPAKEHKPSKIPVYTKRPEFPKKSKSPKRPESPKSPKRPVSPQRPVSPKSPKRPESLDIPKSPKRPESPKSPKRPVSPQRPVSPRRPESPKSPKSPKSPKSPKVPFDPKFKEKLYDSYLDKAAKTKETVTLPPVLPTDESFTHTPIGEPTAEQPDDIEPIEESVFIKETGILTEEVKTEDIHSETGEPEEPKRPDSPTKHSPKPTGTHPSMPKKRRRSDGLALSTTDLESEAGRILRDPTGKIVTMKRSKSFDDLTTVREKEHMGAEIRKIVVDDDGTEADDEDTHPSKEKHLSTVRRRRPRPKKSSKSSKPRKPDSAFVPSIIFIFLVSLIVGIL.

Residues 1–19 (MKFLVLLFNILCLFPILGA) form the signal peptide. 3 disordered regions span residues 492 to 666 (SKKK…FDPK), 681 to 799 (KTKE…PTGK), and 818 to 873 (KEHM…RKPD). 2 stretches are compositionally biased toward basic and acidic residues: residues 525–565 (SESK…EHKP) and 573–591 (KRPEFPKKSKSPKRPESPK). Low complexity predominate over residues 595 to 606 (RPVSPQRPVSPK). Composition is skewed to basic and acidic residues over residues 731–755 (EEVKTEDIHSETGEPEEPKRPDSPT), 788–797 (EAGRILRDPT), and 818–830 (KEHMGAEIRKIVV). Over residues 831–841 (DDDGTEADDED) the composition is skewed to acidic residues. Positions 851 to 869 (STVRRRRPRPKKSSKSSKP) are enriched in basic residues. The GPI-anchor amidated aspartate moiety is linked to residue Asp-873. A propeptide spans 874-893 (SAFVPSIIFIFLVSLIVGIL) (removed in mature form).

It localises to the cell membrane. This chain is 104 kDa microneme/rhoptry antigen, found in Theileria annulata.